An 84-amino-acid chain; its full sequence is Small ribosomal subunit protein bS16 (84 aa).

This sequence belongs to the bacterial ribosomal protein bS16 family.

This chain is Small ribosomal subunit protein bS16, found in Deinococcus radiodurans (strain ATCC 13939 / DSM 20539 / JCM 16871 / CCUG 27074 / LMG 4051 / NBRC 15346 / NCIMB 9279 / VKM B-1422 / R1).